We begin with the raw amino-acid sequence, 774 residues long: Lysyl oxidase homolog 2 (774 aa).

Positions 1–25 (MERRGSSCLCRCLALLALLPTLSLA) are cleaved as a signal peptide. 4 SRCR domains span residues 58–159 (LRLA…VVCS), 188–302 (IRAI…VSCV), 326–425 (VRLR…VRCN), and 435–544 (LRLN…VACS). 9 disulfide bridges follow: C84–C148, C97–C158, C128–C138, C218–C291, C231–C301, C265–C275, C351–C414, C364–C424, and C395–C405. N288 carries N-linked (GlcNAc...) asparagine glycosylation. N455 carries an N-linked (GlcNAc...) asparagine glycan. Intrachain disulfides connect C464–C530, C477–C543, and C511–C521. The lysyl-oxidase like stretch occupies residues 548 to 751 (PDLVLNAEIV…WMYNCHIGGS (204 aa)). Residues D549 and L550 each coordinate Ca(2+). Intrachain disulfides connect C573-C625, C579-C695, C657-C673, and C663-C685. 3 residues coordinate Cu cation: H626, H628, and H630. N-linked (GlcNAc...) asparagine glycosylation is present at N644. Residues 653–689 (KASFCLEDTECEGDIQKSYECANFGEQGITMGCWDMY) constitute a cross-link (lysine tyrosylquinone (Lys-Tyr)). Y689 is modified (2',4',5'-topaquinone). Residues E722, D724, N727, and N728 each contribute to the Ca(2+) site. C732 and C746 are oxidised to a cystine.

This sequence belongs to the lysyl oxidase family. As to quaternary structure, component of some chromatin repressor complex. Interacts with SNAI1. Interacts with TAF10. Interacts with HSPA5. Interacts with EFEMP2. Requires Cu cation as cofactor. Lysine tyrosylquinone residue is required as a cofactor. The lysine tyrosylquinone cross-link (LTQ) is generated by condensation of the epsilon-amino group of a lysine with a topaquinone produced by oxidation of tyrosine. In terms of processing, N-glycosylated. N-glycosylation on Asn-455 and Asn-644 may be essential for proper folding and secretion; may be composed of a fucosylated carbohydrates attached to a trimannose N-linked glycan core.

The protein localises to the secreted. It localises to the extracellular space. It is found in the extracellular matrix. Its subcellular location is the basement membrane. The protein resides in the nucleus. The protein localises to the chromosome. It localises to the endoplasmic reticulum. It catalyses the reaction L-lysyl-[protein] + O2 + H2O = (S)-2-amino-6-oxohexanoyl-[protein] + H2O2 + NH4(+). Its activity is regulated as follows. Specifically inhibited by a mouse monoclonal antibody AB0023, inhibition occurs in a non-competitive manner. Functionally, mediates the post-translational oxidative deamination of lysine residues on target proteins leading to the formation of deaminated lysine (allysine). Acts as a transcription corepressor and specifically mediates deamination of trimethylated 'Lys-4' of histone H3 (H3K4me3), a specific tag for epigenetic transcriptional activation. Shows no activity against histone H3 when it is trimethylated on 'Lys-9' (H3K9me3) or 'Lys-27' (H3K27me3) or when 'Lys-4' is monomethylated (H3K4me1) or dimethylated (H3K4me2). Also mediates deamination of methylated TAF10, a member of the transcription factor IID (TFIID) complex, which induces release of TAF10 from promoters, leading to inhibition of TFIID-dependent transcription. LOXL2-mediated deamination of TAF10 results in transcriptional repression of genes required for embryonic stem cell pluripotency including POU5F1/OCT4, NANOG, KLF4 and SOX2. Involved in epithelial to mesenchymal transition (EMT) via interaction with SNAI1 and participates in repression of E-cadherin CDH1, probably by mediating deamination of histone H3. During EMT, involved with SNAI1 in negatively regulating pericentromeric heterochromatin transcription. SNAI1 recruits LOXL2 to pericentromeric regions to oxidize histone H3 and repress transcription which leads to release of heterochromatin component CBX5/HP1A, enabling chromatin reorganization and acquisition of mesenchymal traits. Interacts with the endoplasmic reticulum protein HSPA5 which activates the IRE1-XBP1 pathway of the unfolded protein response, leading to expression of several transcription factors involved in EMT and subsequent EMT induction. When secreted into the extracellular matrix, promotes cross-linking of extracellular matrix proteins by mediating oxidative deamination of peptidyl lysine residues in precursors to fibrous collagen and elastin. Acts as a regulator of sprouting angiogenesis, probably via collagen IV scaffolding. Acts as a regulator of chondrocyte differentiation, probably by regulating expression of factors that control chondrocyte differentiation. This Bos taurus (Bovine) protein is Lysyl oxidase homolog 2 (LOXL2).